A 203-amino-acid chain; its full sequence is Thymidylate kinase (203 aa).

An ATP-binding site is contributed by 10–17 (GIDGAGKS).

It belongs to the thymidylate kinase family.

The catalysed reaction is dTMP + ATP = dTDP + ADP. Phosphorylation of dTMP to form dTDP in both de novo and salvage pathways of dTTP synthesis. The sequence is that of Thymidylate kinase from Cupriavidus taiwanensis (strain DSM 17343 / BCRC 17206 / CCUG 44338 / CIP 107171 / LMG 19424 / R1) (Ralstonia taiwanensis (strain LMG 19424)).